The sequence spans 38 residues: Photosystem II reaction center protein L (38 aa).

The chain crosses the membrane as a helical span at residues 17–37; sequence SLYWGLLLIFVLAVLFSSYFF.

The protein belongs to the PsbL family. PSII is composed of 1 copy each of membrane proteins PsbA, PsbB, PsbC, PsbD, PsbE, PsbF, PsbH, PsbI, PsbJ, PsbK, PsbL, PsbM, PsbT, PsbX, PsbY, PsbZ, Psb30/Ycf12, at least 3 peripheral proteins of the oxygen-evolving complex and a large number of cofactors. It forms dimeric complexes.

Its subcellular location is the plastid. The protein localises to the chloroplast thylakoid membrane. Functionally, one of the components of the core complex of photosystem II (PSII). PSII is a light-driven water:plastoquinone oxidoreductase that uses light energy to abstract electrons from H(2)O, generating O(2) and a proton gradient subsequently used for ATP formation. It consists of a core antenna complex that captures photons, and an electron transfer chain that converts photonic excitation into a charge separation. This subunit is found at the monomer-monomer interface and is required for correct PSII assembly and/or dimerization. The sequence is that of Photosystem II reaction center protein L from Thalassiosira pseudonana (Marine diatom).